A 95-amino-acid chain; its full sequence is Large ribosomal subunit protein bL25 (95 aa).

The protein belongs to the bacterial ribosomal protein bL25 family. Part of the 50S ribosomal subunit; part of the 5S rRNA/L5/L18/L25 subcomplex. Contacts the 5S rRNA. Binds to the 5S rRNA independently of L5 and L18.

This is one of the proteins that binds to the 5S RNA in the ribosome where it forms part of the central protuberance. The polypeptide is Large ribosomal subunit protein bL25 (Shewanella halifaxensis (strain HAW-EB4)).